A 190-amino-acid chain; its full sequence is GATA transcription factor 17 (190 aa).

A compositionally biased stretch (basic and acidic residues) spans 1 to 14; the sequence is MSEGSEDTKTKLDS. 2 disordered regions span residues 1-42 and 77-101; these read MSEG…DTKR and RQAA…NDLN. A GATA-type zinc finger spans residues 38–92; the sequence is GDTKRTCVDCGTIRTPLWRGGPAGPKSLCNACGIKSRKKRQAALGMRSEEKKKNR.

This sequence belongs to the type IV zinc-finger family. Class B subfamily.

It is found in the nucleus. Transcriptional regulator that specifically binds 5'-GATA-3' or 5'-GAT-3' motifs within gene promoters. In Arabidopsis thaliana (Mouse-ear cress), this protein is GATA transcription factor 17 (GATA17).